A 603-amino-acid polypeptide reads, in one-letter code: NADH-ubiquinone oxidoreductase chain 5 (603 aa).

A run of 16 helical transmembrane segments spans residues 4–24 (YATM…GALI), 38–58 (SIIA…MCLD), 87–107 (MTFI…SLWY), 122–142 (LIFL…QLFI), 144–160 (WEGV…WWYA), 171–191 (AILY…WFLL), 211–233 (TPLL…HPWL), 241–261 (TPVS…FLLI), 272–292 (LIQT…AVCA), 301–320 (IVAF…IGIN), 325–347 (AFLH…GSII), 370–390 (STSL…TGFY), 405–422 (NAWA…TSAY), 457–477 (LTIG…PMST), 482–502 (IPLY…LTAL), and 582–602 (GMIK…LLLI).

Belongs to the complex I subunit 5 family. As to quaternary structure, core subunit of respiratory chain NADH dehydrogenase (Complex I) which is composed of 45 different subunits.

It localises to the mitochondrion inner membrane. It carries out the reaction a ubiquinone + NADH + 5 H(+)(in) = a ubiquinol + NAD(+) + 4 H(+)(out). Functionally, core subunit of the mitochondrial membrane respiratory chain NADH dehydrogenase (Complex I) which catalyzes electron transfer from NADH through the respiratory chain, using ubiquinone as an electron acceptor. Essential for the catalytic activity and assembly of complex I. The sequence is that of NADH-ubiquinone oxidoreductase chain 5 (MT-ND5) from Pan troglodytes (Chimpanzee).